The primary structure comprises 573 residues: Solute carrier family 41 member 2 (573 aa).

Residues 1 to 162 (MTNCKGRSTI…KESSSIMALQ (162 aa)) are Extracellular-facing. A helical transmembrane segment spans residues 163 to 183 (ILVPFLLAGFGTVTAGMVLDI). At 184-195 (VQHWDVFKNVTE) the chain is on the cytoplasmic side. Residues 196-216 (VFILVPALLGLKGNLEMTLAS) traverse the membrane as a helical segment. The Extracellular portion of the chain corresponds to 217-245 (RLSTAVNIGKMDSPIEKWNLIIGNLALKQ). A helical transmembrane segment spans residues 246-266 (VQATVVGFLAAVAAVILGWIP). At 267 to 282 (EGKYSFSHSILLCSSS) the chain is on the cytoplasmic side. A helical membrane pass occupies residues 283-303 (VATAFIASLLQGIIMVGVIVG). At 304 to 313 (SKKTGINPDN) the chain is on the extracellular side. The chain crosses the membrane as a helical span at residues 314-334 (VATPIAASFGDLITLAILAWI). Residues 335-347 (SQGLYTCLETYYY) are Cytoplasmic-facing. A helical membrane pass occupies residues 348–368 (VSPLVGAFFLALTPMGIVIAA). The Extracellular segment spans residues 369 to 376 (KHPATRTV). Residues 377–397 (LHSGWEPVITAMIISSIGGLI) form a helical membrane-spanning segment. Topologically, residues 398–406 (LDTTVSDPN) are cytoplasmic. A helical transmembrane segment spans residues 407-427 (LVGIVVYTPVINGIGGNLVAI). Residues 428–469 (QASRISTYLHLHSIPGELPEEAKGCYYPCRTYYGTGVNNKSA) lie on the Extracellular side of the membrane. The helical transmembrane segment at 470–490 (QVLLLLVIPGHLIFLYTIHLM) threads the bilayer. The Cytoplasmic segment spans residues 491-499 (KSGHTSLTP). Residues 500-520 (IFIAVYLFAALLQVFTLLWIA) traverse the membrane as a helical segment. Over 521 to 543 (DWMVHHFWKKGKDPDSFSIPYLT) the chain is Extracellular. Residues 544-564 (ALGDLLGTALLAVGFHFLWLI) form a helical membrane-spanning segment. Over 565–573 (GDRDGDVGD) the chain is Cytoplasmic.

It belongs to the SLC41A transporter family.

Its subcellular location is the cell membrane. It carries out the reaction Mg(2+)(in) = Mg(2+)(out). It catalyses the reaction Mn(2+)(in) = Mn(2+)(out). The enzyme catalyses Co(2+)(in) = Co(2+)(out). The catalysed reaction is Ni(2+)(in) = Ni(2+)(out). It carries out the reaction Fe(2+)(in) = Fe(2+)(out). Acts as a plasma-membrane magnesium transporter. Can also mediate the transport of other divalent metal cations in an order of Ba(2+) &gt; Ni(2+) &gt; Co(2+) &gt; Fe(2+) &gt; Mn(2+). The polypeptide is Solute carrier family 41 member 2 (SLC41A2) (Gallus gallus (Chicken)).